The following is a 256-amino-acid chain: Hydroxyacylglutathione hydrolase (256 aa).

The Zn(2+) site is built by histidine 57, histidine 59, aspartate 61, histidine 62, histidine 115, aspartate 134, and histidine 172.

It belongs to the metallo-beta-lactamase superfamily. Glyoxalase II family. In terms of assembly, monomer. Requires Zn(2+) as cofactor.

The catalysed reaction is an S-(2-hydroxyacyl)glutathione + H2O = a 2-hydroxy carboxylate + glutathione + H(+). Its pathway is secondary metabolite metabolism; methylglyoxal degradation; (R)-lactate from methylglyoxal: step 2/2. In terms of biological role, thiolesterase that catalyzes the hydrolysis of S-D-lactoyl-glutathione to form glutathione and D-lactic acid. This Rhodospirillum rubrum (strain ATCC 11170 / ATH 1.1.1 / DSM 467 / LMG 4362 / NCIMB 8255 / S1) protein is Hydroxyacylglutathione hydrolase.